A 319-amino-acid polypeptide reads, in one-letter code: Cobalamin biosynthesis protein CbiB (319 aa).

A run of 5 helical transmembrane segments spans residues 56 to 76 (VMWV…LALA), 82 to 102 (WFGW…RSLA), 153 to 173 (VDGI…LAMA), 204 to 224 (VANY…AGLC), and 296 to 316 (LMWV…CGLS).

The protein belongs to the CobD/CbiB family.

It is found in the cell membrane. The protein operates within cofactor biosynthesis; adenosylcobalamin biosynthesis. Its function is as follows. Converts cobyric acid to cobinamide by the addition of aminopropanol on the F carboxylic group. However, the true cosubstrate could be (R)-1-amino-2-propanol O-2-phosphate, leading to cobinamide phosphate. The chain is Cobalamin biosynthesis protein CbiB from Salmonella choleraesuis (strain SC-B67).